The chain runs to 373 residues: Transaldolase (373 aa).

Catalysis depends on Lys-143, which acts as the Schiff-base intermediate with substrate.

It belongs to the transaldolase family. Type 2 subfamily.

It is found in the cytoplasm. The catalysed reaction is D-sedoheptulose 7-phosphate + D-glyceraldehyde 3-phosphate = D-erythrose 4-phosphate + beta-D-fructose 6-phosphate. It functions in the pathway carbohydrate degradation; pentose phosphate pathway; D-glyceraldehyde 3-phosphate and beta-D-fructose 6-phosphate from D-ribose 5-phosphate and D-xylulose 5-phosphate (non-oxidative stage): step 2/3. Functionally, transaldolase is important for the balance of metabolites in the pentose-phosphate pathway. The sequence is that of Transaldolase from Mycobacterium marinum (strain ATCC BAA-535 / M).